A 368-amino-acid polypeptide reads, in one-letter code: Phospho-N-acetylmuramoyl-pentapeptide-transferase (368 aa).

Helical transmembrane passes span 30–50, 72–92, 99–119, 135–155, 170–190, 201–221, 238–258, 265–286, and 345–365; these read AAAI…IAYL, LPTM…FLWA, VWLV…DDYL, LIGQ…DPSM, LTIN…TAIS, GLAA…AYLA, GGEV…FLWF, IIMG…ALLI, and KIVI…LMTL.

Belongs to the glycosyltransferase 4 family. MraY subfamily. Requires Mg(2+) as cofactor.

Its subcellular location is the cell inner membrane. It catalyses the reaction UDP-N-acetyl-alpha-D-muramoyl-L-alanyl-gamma-D-glutamyl-meso-2,6-diaminopimeloyl-D-alanyl-D-alanine + di-trans,octa-cis-undecaprenyl phosphate = di-trans,octa-cis-undecaprenyl diphospho-N-acetyl-alpha-D-muramoyl-L-alanyl-D-glutamyl-meso-2,6-diaminopimeloyl-D-alanyl-D-alanine + UMP. The protein operates within cell wall biogenesis; peptidoglycan biosynthesis. Functionally, catalyzes the initial step of the lipid cycle reactions in the biosynthesis of the cell wall peptidoglycan: transfers peptidoglycan precursor phospho-MurNAc-pentapeptide from UDP-MurNAc-pentapeptide onto the lipid carrier undecaprenyl phosphate, yielding undecaprenyl-pyrophosphoryl-MurNAc-pentapeptide, known as lipid I. The sequence is that of Phospho-N-acetylmuramoyl-pentapeptide-transferase from Chlorobium chlorochromatii (strain CaD3).